The sequence spans 268 residues: WUSCHEL-related homeobox 12 (268 aa).

Over residues 1–16 (MNQEGASHSPSSTSTE) the composition is skewed to polar residues. Disordered regions lie at residues 1 to 22 (MNQEGASHSPSSTSTEPVRARW) and 173 to 198 (SDHNHQQQHHSSNAASVLNPSDQNSN). The segment at residues 17 to 81 (PVRARWSPKP…NRRSRSRRRH (65 aa)) is a DNA-binding region (homeobox; WUS-type).

The protein belongs to the WUS homeobox family.

It is found in the nucleus. Transcription factor which may be involved in developmental processes. This Arabidopsis thaliana (Mouse-ear cress) protein is WUSCHEL-related homeobox 12 (WOX12).